A 61-amino-acid polypeptide reads, in one-letter code: Metallothionein-2A (61 aa).

An N-acetylmethionine modification is found at Met1. Positions Met1–Cys29 are beta. Residues Cys5, Cys7, Cys13, Cys15, Cys19, Cys21, Cys24, Cys26, Cys29, Cys33, Cys34, Cys36, Cys37, Cys41, Cys44, Cys48, Cys50, and Cys57 each contribute to the a divalent metal cation site. An alpha region spans residues Lys30–Ala61. A Phosphoserine modification is found at Ser58. 2 residues coordinate a divalent metal cation: Cys59 and Cys60.

The protein belongs to the metallothionein superfamily. Type 1 family. As to quaternary structure, interacts with EOLA1.

Metallothioneins have a high content of cysteine residues that bind various heavy metals; these proteins are transcriptionally regulated by both heavy metals and glucocorticoids. This chain is Metallothionein-2A (MT2A), found in Sus scrofa (Pig).